We begin with the raw amino-acid sequence, 420 residues long: Ribosome biogenesis protein WDR12 homolog (420 aa).

Positions 10–92 are ubiquitin-like (UBL) domain; that stretch reads VQVHLKTKQE…EDAIEIEYVE (83 aa). 7 WD repeats span residues 104 to 142, 143 to 185, 192 to 231, 250 to 288, 290 to 329, 335 to 375, and 379 to 417; these read LHDDWVSAVKARGKWILSGCYDNSLNLWTNKGKHILTIS, GHTA…NAVD, GHERGVDSVSVSPDGLRFATGSWDTMLKVWSAELDDGVEG, GHRESVSAVQWMDATTLLTGSWDYTLKVWDLSLEGIKTE, STNKSIFDASYSKLNRLILTASADKNLRLYDPRTNQGSVV, GHNA…APLY, and GHGDKVLDIDWSNPKYIVSGGVDNTVRVFKSRKALAEDT.

The protein belongs to the WD repeat WDR12/YTM1 family.

The protein resides in the nucleus. It localises to the nucleolus. Its subcellular location is the nucleoplasm. Functionally, required for maturation of ribosomal RNAs and formation of the large ribosomal subunit. This chain is Ribosome biogenesis protein WDR12 homolog, found in Drosophila sechellia (Fruit fly).